Reading from the N-terminus, the 157-residue chain is Large ribosomal subunit protein uL15 (157 aa).

The interval 1 to 40 (MKLHELSDNPGATKKRMRIGRGPGSGKGKMGGRGIKGQKS) is disordered. The segment covering 21 to 35 (RGPGSGKGKMGGRGI) has biased composition (gly residues).

This sequence belongs to the universal ribosomal protein uL15 family. Part of the 50S ribosomal subunit.

In terms of biological role, binds to the 23S rRNA. The polypeptide is Large ribosomal subunit protein uL15 (Ruegeria pomeroyi (strain ATCC 700808 / DSM 15171 / DSS-3) (Silicibacter pomeroyi)).